A 687-amino-acid polypeptide reads, in one-letter code: Chloride channel protein ClC-Kb (687 aa).

Residues 1–50 are Cytoplasmic-facing; it reads MEEIVGLREGSPRKPVPLQELWRPCPRIRRNIQGSLEWLKERLFRVGEDW. The next 2 helical transmembrane spans lie at 51–82 and 91–111; these read YFLV…KWLY and LRYL…SGFS. The helical intramembrane region spans 116–127; sequence PSSGGSGIPEVK. Serine 121 is a binding site for chloride. 2 helical membrane-spanning segments follow: residues 141–160 and 161–180; these read IKNF…TGST and IFLG…AAYL. Residue asparagine 193 is glycosylated (N-linked (GlcNAc...) asparagine). Residues 203–224 constitute an intramembrane region (helical); sequence AGAAVGVATVFAAPISGVLFSI. Residues 236 to 255 traverse the membrane as a helical segment; the sequence is YWRGFFAATCGAFMFHLLAV. Positions 259, 261, 278, and 281 each coordinate Ca(2+). Transmembrane regions (helical) follow at residues 282-310 and 325-342; these read IFFF…LFFL and PLYS…TYPP. Positions 349–360 form an intramembrane region, helical; the sequence is ASRLSMSEYLET. A run of 2 helical transmembrane segments spans residues 400 to 420 and 421 to 440; these read GTLV…TTIP and IPAG…GRLF. Residue phenylalanine 426 coordinates chloride. Positions 464–496 form an intramembrane region, helical; the sequence is GAYALAGAAAFSGAVTHTLSTALLAFEVSGQIV. Residues 500–520 form a helical membrane-spanning segment; the sequence is PVLMAVLAANAICQSYQPSFY. Over 521-687 the chain is Cytoplasmic; it reads DGTIIVKKLP…STLTNPPAPK (167 aa). 2 consecutive CBS domains span residues 551–609 and 626–687; these read MNCT…DSAS and CPTQ…PAPK.

It belongs to the chloride channel (TC 2.A.49) family. CLCNKB subfamily. As to quaternary structure, homodimer. Interacts with BSND. Post-translationally, N-glycosylated. Expressed predominantly in the kidney. Expressed in all segments of the nephron examined, including the S2 segment and the glomerulus.

It is found in the basolateral cell membrane. The enzyme catalyses chloride(in) = chloride(out). It carries out the reaction iodide(out) = iodide(in). The catalysed reaction is nitrate(in) = nitrate(out). It catalyses the reaction bromide(in) = bromide(out). In terms of biological role, anion-selective channel permeable to small monovalent anions with ion selectivity for chloride &gt; bromide &gt; nitrate &gt; iodide. Forms a homodimeric channel where each subunit has its own ion conduction pathway. May conduct double-barreled currents controlled by two types of gates, two fast gates that control each subunit independently and a slow common gate that opens and shuts off both subunits simultaneously. Assembles with the regulatory subunit BSND/Barttin for sorting at the basolateral plasma membrane domain and functional switch to the ion conducting state. CLCNKB:BSND channels display mostly a linear current-voltage relationship controlled by common gate. Mediates chloride conductance along nephron segments, namely the thick ascending limb of Henle's loop, convoluted tubule and the collecting duct, contributing to the maintenance of systemic acid-base and electrolyte homeostasis. Conducts chloride currents in the stria vascularis of the inner ear to establish the endocochlear potential necessary for normal hearing. The protein is Chloride channel protein ClC-Kb of Rattus norvegicus (Rat).